A 177-amino-acid chain; its full sequence is MSRVGKSPITVPKGAEISINGANVTVKGPLGTLTHNLHPSVGLKQEDGVLTVVLNNDSPEAGAQSGTARALVNNMVVGVTTGFERKLSLVGVGYRAAAQGETLKLQLGFSHDIIYNLPKGVKAETPTQTEIIIKGSNKQQVGQVAAEVRAYRSPEPYKGKGVRYVDEVVHLKETKKK.

It belongs to the universal ribosomal protein uL6 family. As to quaternary structure, part of the 50S ribosomal subunit.

Functionally, this protein binds to the 23S rRNA, and is important in its secondary structure. It is located near the subunit interface in the base of the L7/L12 stalk, and near the tRNA binding site of the peptidyltransferase center. The polypeptide is Large ribosomal subunit protein uL6 (Polynucleobacter asymbioticus (strain DSM 18221 / CIP 109841 / QLW-P1DMWA-1) (Polynucleobacter necessarius subsp. asymbioticus)).